Reading from the N-terminus, the 924-residue chain is Protein translocase subunit SecA (924 aa).

Residues glutamine 87, 105 to 109 (GEGKT), and aspartate 515 each bind ATP. Residues cysteine 908, cysteine 910, cysteine 919, and histidine 920 each coordinate Zn(2+).

It belongs to the SecA family. As to quaternary structure, monomer and homodimer. Part of the essential Sec protein translocation apparatus which comprises SecA, SecYEG and auxiliary proteins SecDF-YajC and YidC. Zn(2+) is required as a cofactor.

It localises to the cell inner membrane. Its subcellular location is the cytoplasm. The catalysed reaction is ATP + H2O + cellular proteinSide 1 = ADP + phosphate + cellular proteinSide 2.. Part of the Sec protein translocase complex. Interacts with the SecYEG preprotein conducting channel. Has a central role in coupling the hydrolysis of ATP to the transfer of proteins into and across the cell membrane, serving both as a receptor for the preprotein-SecB complex and as an ATP-driven molecular motor driving the stepwise translocation of polypeptide chains across the membrane. This is Protein translocase subunit SecA from Cupriavidus pinatubonensis (strain JMP 134 / LMG 1197) (Cupriavidus necator (strain JMP 134)).